Consider the following 276-residue polypeptide: Undecaprenyl-diphosphatase (276 aa).

6 helical membrane-spanning segments follow: residues 43 to 63, 85 to 105, 109 to 129, 183 to 203, 218 to 238, and 254 to 274; these read RAMAFNIIIQLGAILAVVWEF, LNLLIAFMPAVVLGVIFADTI, LFNAITVATALVVGGVIMLWA, AATEFSFFLAMPTMVGAAVYS, VFAIGFITSFVFAMIAVRALL, and IAFGLLILATWQFGWIDWASA.

The protein belongs to the UppP family.

It is found in the cell inner membrane. The enzyme catalyses di-trans,octa-cis-undecaprenyl diphosphate + H2O = di-trans,octa-cis-undecaprenyl phosphate + phosphate + H(+). Functionally, catalyzes the dephosphorylation of undecaprenyl diphosphate (UPP). Confers resistance to bacitracin. This chain is Undecaprenyl-diphosphatase, found in Pseudomonas syringae pv. tomato (strain ATCC BAA-871 / DC3000).